We begin with the raw amino-acid sequence, 663 residues long: MPMSARSRRSNPRLPPSPSSSSSSDAVRASPHSSPPSRLRPPSANPDVSSNILLFLIGFRLVNALTVRTFFQPDEFFQSLEPAWKIAFGTNQGPWITWEWEHQLRSSLHPLIFAAVYTVADLVARTLGLTPTSRAELLIAGPGITQAVIAAVGDFYTWKLARYIYGDRSHESWATVRIRSNAIEADADQLQLALTVVSLASVALYRSAWGERQTLAREALICGSSVLAVSTVVDRFFYGFWTFPPLRFLYFNVAQSLAAFYGRNDWSYYASQGYPLLLTTALPFTLVGLYRTLKTPPKLEKQKGSILVQLASISLAMPATLSVITHKEVRFIYPLLPALHILSASPLVEFFIPALTTTNREYISRRLTLIFLLWANVAIAIYTTLFHASGVISVLSYIREQHQIHGTANIPSLPKESPASYGGITTGFLMPCHSTPWRSHLVEPTIHAWALSCEPPVGLTAEEKAAYRDEADQFYDNPTQFLQDNMVGGLRHIPRRPSYATPPSSQRQPTQLFPPHEWPDYLVFFAQLEPTLKDALRGSSYGECWRTFNSAWHDDSRRRGDVVVWCLDHAKQQAWQSQKHQRELEDRDRQFDHIIKRFQRDATPSKSWHWSHWTSPFSSQSKSWSWPWERKKRTLFGYELPDLPQWGWFGKRKKKTLLSDFWF.

The segment covering 1–11 (MPMSARSRRSN) has biased composition (basic residues). A disordered region spans residues 1–44 (MPMSARSRRSNPRLPPSPSSSSSSDAVRASPHSSPPSRLRPPSA). Residues 19-42 (SSSSSSDAVRASPHSSPPSRLRPP) show a composition bias toward low complexity. The next 8 helical transmembrane spans lie at 47–67 (DVSSNILLFLIGFRLVNALTV), 110–130 (PLIFAAVYTVADLVARTLGLT), 137–157 (LLIAGPGITQAVIAAVGDFYT), 226–246 (VLAVSTVVDRFFYGFWTFPPL), 269–289 (YASQGYPLLLTTALPFTLVGL), 304–324 (GSILVQLASISLAMPATLSVI), 335–355 (LLPALHILSASPLVEFFIPAL), and 367–387 (LTLIFLLWANVAIAIYTTLFH). The tract at residues 492–512 (HIPRRPSYATPPSSQRQPTQL) is disordered. Polar residues predominate over residues 501-511 (TPPSSQRQPTQ).

This sequence belongs to the glycosyltransferase 22 family. PIGB subfamily.

It is found in the endoplasmic reticulum membrane. It participates in glycolipid biosynthesis; glycosylphosphatidylinositol-anchor biosynthesis. Its function is as follows. Mannosyltransferase involved in glycosylphosphatidylinositol-anchor biosynthesis. Transfers the third mannose to Man2-GlcN-acyl-PI during GPI precursor assembly. The chain is GPI mannosyltransferase 3 (gpi10) from Emericella nidulans (strain FGSC A4 / ATCC 38163 / CBS 112.46 / NRRL 194 / M139) (Aspergillus nidulans).